The chain runs to 1007 residues: Serine/threonine-protein kinase PRP4 homolog (1007 aa).

Residues 1-104 (MAATEPPSLR…PAKRTKLDDL (104 aa)) form a disordered region. At alanine 2 the chain carries N-acetylalanine. Phosphoserine occurs at positions 8, 21, 24, and 33. Basic residues-rich tracts occupy residues 40-60 (KHSR…KHKH) and 68-82 (KKHK…HKRK). Positions 83–92 (EVLDASDKEG) are enriched in basic and acidic residues. Residues serine 88 and serine 94 each carry the phosphoserine modification. Lysine 100 carries the N6-acetyllysine; alternate modification. Lysine 100 is covalently cross-linked (Glycyl lysine isopeptide (Lys-Gly) (interchain with G-Cter in SUMO2); alternate). Lysine 112 participates in a covalent cross-link: Glycyl lysine isopeptide (Lys-Gly) (interchain with G-Cter in SUMO2). Lysine 118 is covalently cross-linked (Glycyl lysine isopeptide (Lys-Gly) (interchain with G-Cter in SUMO2); alternate). Lysine 118 is covalently cross-linked (Glycyl lysine isopeptide (Lys-Gly) (interchain with G-Cter in SUMO1); alternate). Serine 132 carries the post-translational modification Phosphoserine. The residue at position 141 (tyrosine 141) is a Phosphotyrosine. Disordered regions lie at residues 141–535 (YESG…EDEE) and 560–583 (NISV…SPDD). Phosphoserine is present on residues serine 143, serine 145, and serine 167. The span at 158 to 169 (GNRSSTRSSSTR) shows a compositional bias: low complexity. Glycyl lysine isopeptide (Lys-Gly) (interchain with G-Cter in SUMO2) cross-links involve residues lysine 171 and lysine 178. Composition is skewed to basic residues over residues 180 to 203 (SAKK…RKSK) and 215 to 231 (RSKS…SKRS). 6 positions are modified to phosphoserine: serine 240, serine 242, serine 258, serine 278, serine 292, and serine 294. Basic and acidic residues predominate over residues 248-271 (RSQEKVGKARSPADEKIKSEEKGK). The span at 294–303 (SPVDLRDKSK) shows a compositional bias: basic and acidic residues. A compositionally biased stretch (basic residues) spans 304 to 315 (DRRSRSKERKSK). The span at 316–325 (RSEIDKEKKP) shows a compositional bias: basic and acidic residues. 5 positions are modified to phosphoserine: serine 328, serine 354, serine 356, serine 366, and serine 368. A compositionally biased stretch (basic residues) spans 342–367 (PSRRPGRSPKRRSLSPKQRDKSRRSR). Threonine 385 carries the post-translational modification Phosphothreonine. Serine 387 bears the Phosphoserine mark. Basic and acidic residues-rich tracts occupy residues 395-408 (RSLE…ERRR) and 415-429 (RPRD…RSKD). Phosphoserine is present on residues serine 427, serine 431, and serine 437. The span at 438–497 (PSRRRSRSPIRRRSRSPLRRSRSPRRRSRSPRRRDRSRRSRSRLRRRSRSRGGHRRRSRS) shows a compositional bias: basic residues. Residues serine 518, serine 519, serine 520, serine 565, serine 569, serine 576, serine 578, and serine 580 each carry the phosphoserine modification. Positions 518–535 (SSSDDNLEDFDVEEEDEE) are enriched in acidic residues. A compositionally biased stretch (low complexity) spans 562–581 (SVPSEPSSPQSSTRSRSPSP). Residues lysine 593 and lysine 659 each participate in a glycyl lysine isopeptide (Lys-Gly) (interchain with G-Cter in SUMO2) cross-link. The Protein kinase domain maps to 687 to 1003 (YNVYGYTGQG…INQALQHAFI (317 aa)). ATP contacts are provided by residues 693 to 701 (TGQGVFSNV) and lysine 717. Lysine 717 is subject to N6-acetyllysine. Aspartate 815 serves as the catalytic Proton acceptor. The residue at position 849 (tyrosine 849) is a Phosphotyrosine. Serine 852 bears the Phosphoserine mark.

It belongs to the protein kinase superfamily. CMGC Ser/Thr protein kinase family. As to quaternary structure, interacts with CLK1 C-terminus. Associates with the U5 snRNP and NCOR1 deacetylase complexes. Identified in the spliceosome C complex. In terms of processing, phosphorylated by CLK1. Autophosphorylated; phosphorylation inhibits interaction with its targets, such as PRPF6 or SMARCA4.

The protein resides in the nucleus. It is found in the chromosome. Its subcellular location is the centromere. The protein localises to the kinetochore. It catalyses the reaction L-seryl-[protein] + ATP = O-phospho-L-seryl-[protein] + ADP + H(+). The enzyme catalyses L-threonyl-[protein] + ATP = O-phospho-L-threonyl-[protein] + ADP + H(+). Its function is as follows. Serine/threonine kinase involved in spliceosomal assembly as well as mitosis and signaling regulation. Connects chromatin mediated regulation of transcription and pre-mRNA splicing. During spliceosomal assembly, interacts with and phosphorylates PRPF6 and PRPF31, components of the U4/U6-U5 tri-small nuclear ribonucleoprotein (snRNP), to facilitate the formation of the spliceosome B complex. Plays a role in regulating transcription and the spindle assembly checkpoint (SAC). Associates with U5 snRNP and NCOR1 deacetylase complexes which may allow a coordination of pre-mRNA splicing with chromatin remodeling events involved in transcriptional regulation. Associates and probably phosphorylates SMARCA4 and NCOR1. Phosphorylates SRSF1. Associates with kinetochores during mitosis and is necessary for recruitment and maintenance of the checkpoint proteins such as MAD1L1 and MAD12L1 at the kinetochores. Phosphorylates and regulates the activity of the transcription factors such as ELK1 and KLF13. Phosphorylates nuclear YAP1 and WWTR1/TAZ which induces nuclear exclusion and regulates Hippo signaling pathway, involved in tissue growth control. This chain is Serine/threonine-protein kinase PRP4 homolog (Prp4k), found in Rattus norvegicus (Rat).